Consider the following 205-residue polypeptide: Thiamine-phosphate synthase (205 aa).

4-amino-2-methyl-5-(diphosphooxymethyl)pyrimidine-binding positions include 37–41 (QVREK) and asparagine 69. Mg(2+) is bound by residues aspartate 70 and aspartate 89. Serine 108 contributes to the 4-amino-2-methyl-5-(diphosphooxymethyl)pyrimidine binding site. 134–136 (TGS) serves as a coordination point for 2-[(2R,5Z)-2-carboxy-4-methylthiazol-5(2H)-ylidene]ethyl phosphate. Position 137 (lysine 137) interacts with 4-amino-2-methyl-5-(diphosphooxymethyl)pyrimidine. 2-[(2R,5Z)-2-carboxy-4-methylthiazol-5(2H)-ylidene]ethyl phosphate contacts are provided by residues glycine 165 and 185–186 (IS).

It belongs to the thiamine-phosphate synthase family. The cofactor is Mg(2+).

The catalysed reaction is 2-[(2R,5Z)-2-carboxy-4-methylthiazol-5(2H)-ylidene]ethyl phosphate + 4-amino-2-methyl-5-(diphosphooxymethyl)pyrimidine + 2 H(+) = thiamine phosphate + CO2 + diphosphate. The enzyme catalyses 2-(2-carboxy-4-methylthiazol-5-yl)ethyl phosphate + 4-amino-2-methyl-5-(diphosphooxymethyl)pyrimidine + 2 H(+) = thiamine phosphate + CO2 + diphosphate. It carries out the reaction 4-methyl-5-(2-phosphooxyethyl)-thiazole + 4-amino-2-methyl-5-(diphosphooxymethyl)pyrimidine + H(+) = thiamine phosphate + diphosphate. It participates in cofactor biosynthesis; thiamine diphosphate biosynthesis; thiamine phosphate from 4-amino-2-methyl-5-diphosphomethylpyrimidine and 4-methyl-5-(2-phosphoethyl)-thiazole: step 1/1. Its function is as follows. Condenses 4-methyl-5-(beta-hydroxyethyl)thiazole monophosphate (THZ-P) and 2-methyl-4-amino-5-hydroxymethyl pyrimidine pyrophosphate (HMP-PP) to form thiamine monophosphate (TMP). This is Thiamine-phosphate synthase from Clostridium botulinum (strain 657 / Type Ba4).